Consider the following 957-residue polypeptide: Glycine dehydrogenase (decarboxylating) (957 aa).

Lys-708 carries the post-translational modification N6-(pyridoxal phosphate)lysine.

Belongs to the GcvP family. The glycine cleavage system is composed of four proteins: P, T, L and H. Requires pyridoxal 5'-phosphate as cofactor.

It catalyses the reaction N(6)-[(R)-lipoyl]-L-lysyl-[glycine-cleavage complex H protein] + glycine + H(+) = N(6)-[(R)-S(8)-aminomethyldihydrolipoyl]-L-lysyl-[glycine-cleavage complex H protein] + CO2. The glycine cleavage system catalyzes the degradation of glycine. The P protein binds the alpha-amino group of glycine through its pyridoxal phosphate cofactor; CO(2) is released and the remaining methylamine moiety is then transferred to the lipoamide cofactor of the H protein. This chain is Glycine dehydrogenase (decarboxylating), found in Shigella dysenteriae serotype 1 (strain Sd197).